The sequence spans 89 residues: Protein PerC (89 aa).

Transcriptional activator of eaeA/bfpA expression in enteropathogenic E.coli. In Escherichia coli O111:H-, this protein is Protein PerC (perC).